The chain runs to 516 residues: L-amino acid oxidase Lm29 (516 aa).

Positions 1-18 are cleaved as a signal peptide; sequence MNVFFMFSLLFLAALGSC. C28 and C191 are disulfide-bonded. Residues 61–62, 81–82, R89, and 105–108 contribute to the FAD site; these read MS, EA, and GPMR. Residue R108 participates in substrate binding. N190 carries N-linked (GlcNAc...) asparagine glycosylation. H241 contributes to the substrate binding site. Residue V279 participates in FAD binding. An intrachain disulfide couples C349 to C430. N-linked (GlcNAc...) asparagine glycosylation occurs at N379. Residue Y390 participates in substrate binding. FAD-binding positions include E475 and 482-487; that span reads GWIDST. 482-483 is a binding site for substrate; the sequence is GW.

The protein belongs to the flavin monoamine oxidase family. FIG1 subfamily. As to quaternary structure, homodimer; non-covalently linked. Requires FAD as cofactor. Expressed by the venom gland.

Its subcellular location is the secreted. The enzyme catalyses an L-alpha-amino acid + O2 + H2O = a 2-oxocarboxylate + H2O2 + NH4(+). The catalysed reaction is L-leucine + O2 + H2O = 4-methyl-2-oxopentanoate + H2O2 + NH4(+). It carries out the reaction L-phenylalanine + O2 + H2O = 3-phenylpyruvate + H2O2 + NH4(+). It catalyses the reaction L-tryptophan + O2 + H2O = indole-3-pyruvate + H2O2 + NH4(+). The enzyme catalyses L-methionine + O2 + H2O = 4-methylsulfanyl-2-oxobutanoate + H2O2 + NH4(+). The catalysed reaction is L-isoleucine + O2 + H2O = (S)-3-methyl-2-oxopentanoate + H2O2 + NH4(+). It carries out the reaction L-tyrosine + O2 + H2O = 3-(4-hydroxyphenyl)pyruvate + H2O2 + NH4(+). In terms of biological role, catalyzes an oxidative deamination of predominantly hydrophobic and aromatic L-amino acids, thus producing hydrogen peroxide that may contribute to the diverse toxic effects of this enzyme. Is highly active on L-Met=L-Leu&gt;&gt;L-Phe&gt;L-Trp&gt;L-Tyr&gt;L-Ile, and weakly or not active on L-His, L-Arg, L-Val, L-Gln, L-Thr, L-Lys, and L-Ser. Exhibits a low myotoxicity (a mild myonecrosis is observed after injection in mice quadriceps muscle). In vitro, is cytotoxic to a lot of human cell lines, including AGS (IC(50)=22.7 ug/ml), MCF-7 (IC(50)=1.4 ug/ml), HL-60, HeLa and Jurkat cells, as well as to the parasite Leishmania brasiliensis (IC(50)=2.22 ug/ml). This cytotoxicity is dependent on the production of hydrogen peroxyde, since it is inhibited by catalase, a hydrogen peroxyde scavenger. The sequence is that of L-amino acid oxidase Lm29 from Lachesis muta (South American bushmaster).